An 864-amino-acid chain; its full sequence is Leucine--tRNA ligase (864 aa).

The short motif at 42–52 (PYPSGKLHMGH) is the 'HIGH' region element. The 'KMSKS' region motif lies at 624 to 628 (KMSKS). ATP is bound at residue Lys627.

This sequence belongs to the class-I aminoacyl-tRNA synthetase family.

It is found in the cytoplasm. It carries out the reaction tRNA(Leu) + L-leucine + ATP = L-leucyl-tRNA(Leu) + AMP + diphosphate. This chain is Leucine--tRNA ligase, found in Burkholderia cenocepacia (strain ATCC BAA-245 / DSM 16553 / LMG 16656 / NCTC 13227 / J2315 / CF5610) (Burkholderia cepacia (strain J2315)).